Here is a 54-residue protein sequence, read N- to C-terminus: Large ribosomal subunit protein bL32 (54 aa).

A disordered region spans residues 1 to 26 (MAVQKNKPTRSKRGMRRSHDSLTAPH). Residues 7-16 (KPTRSKRGMR) show a composition bias toward basic residues.

Belongs to the bacterial ribosomal protein bL32 family.

The sequence is that of Large ribosomal subunit protein bL32 from Buchnera aphidicola subsp. Acyrthosiphon pisum (strain 5A).